Here is a 710-residue protein sequence, read N- to C-terminus: Probable threonine--tRNA ligase 1, cytoplasmic (710 aa).

The tract at residues 1–35 is disordered; that stretch reads MSDSQENKPVETPTEVKPVAEKKPAAEKKEKKPAV. Over residues 18-33 the composition is skewed to basic and acidic residues; it reads PVAEKKPAAEKKEKKP. Residues 72-137 form the TGS domain; that stretch reads KEEPINVTLP…EADCNLQLCK (66 aa).

This sequence belongs to the class-II aminoacyl-tRNA synthetase family.

It is found in the cytoplasm. It carries out the reaction tRNA(Thr) + L-threonine + ATP = L-threonyl-tRNA(Thr) + AMP + diphosphate + H(+). This is Probable threonine--tRNA ligase 1, cytoplasmic (thrS1) from Dictyostelium discoideum (Social amoeba).